The following is a 445-amino-acid chain: Argininosuccinate synthase (445 aa).

ATP-binding positions include 17–25 and alanine 43; that span reads AFSGGLDTS. Tyrosine 99 contacts L-citrulline. ATP is bound by residues glycine 129 and threonine 131. Positions 131, 135, and 136 each coordinate L-aspartate. Asparagine 135 serves as a coordination point for L-citrulline. An ATP-binding site is contributed by aspartate 136. L-citrulline-binding residues include arginine 139 and serine 192. Aspartate 194 is an ATP binding site. L-citrulline-binding residues include threonine 201, glutamate 203, and glutamate 280.

The protein belongs to the argininosuccinate synthase family. Type 2 subfamily. As to quaternary structure, homotetramer.

The protein localises to the cytoplasm. It catalyses the reaction L-citrulline + L-aspartate + ATP = 2-(N(omega)-L-arginino)succinate + AMP + diphosphate + H(+). The protein operates within amino-acid biosynthesis; L-arginine biosynthesis; L-arginine from L-ornithine and carbamoyl phosphate: step 2/3. The sequence is that of Argininosuccinate synthase from Rhodopseudomonas palustris (strain BisA53).